Here is a 408-residue protein sequence, read N- to C-terminus: Branched-chain amino acid aminotransferase 2, chloroplastic (408 aa).

A chloroplast-targeting transit peptide spans 1 to 58; that stretch reads MDCAAALLPGFHPNYLLCPSRHFSSLLPKTDLSSPLKFQLQNKQLSLASSHGFSPVIC. R152 is a binding site for pyridoxal 5'-phosphate. Residue K254 is the Proton acceptor of the active site. Position 254 is an N6-(pyridoxal phosphate)lysine (K254). E290 is a pyridoxal 5'-phosphate binding site.

This sequence belongs to the class-IV pyridoxal-phosphate-dependent aminotransferase family. Pyridoxal 5'-phosphate is required as a cofactor. As to expression, expressed in lupulin glands and leaves.

Its subcellular location is the plastid. It is found in the chloroplast. It catalyses the reaction L-isoleucine + 2-oxoglutarate = (S)-3-methyl-2-oxopentanoate + L-glutamate. The catalysed reaction is L-leucine + 2-oxoglutarate = 4-methyl-2-oxopentanoate + L-glutamate. It carries out the reaction L-valine + 2-oxoglutarate = 3-methyl-2-oxobutanoate + L-glutamate. It participates in amino-acid biosynthesis; L-isoleucine biosynthesis; L-isoleucine from 2-oxobutanoate: step 4/4. Its pathway is amino-acid biosynthesis; L-leucine biosynthesis; L-leucine from 3-methyl-2-oxobutanoate: step 4/4. It functions in the pathway amino-acid biosynthesis; L-valine biosynthesis; L-valine from pyruvate: step 4/4. Its function is as follows. Converts 2-oxo acids to branched-chain amino acids. Shows no kinetic preferences corresponding to anabolic or catabolic functions, but likely involved in BCAA biosynthesis. This chain is Branched-chain amino acid aminotransferase 2, chloroplastic, found in Humulus lupulus (European hop).